A 56-amino-acid polypeptide reads, in one-letter code: Small ribosomal subunit protein uS14 (56 aa).

Residues Cys-21, Cys-24, Cys-39, and Cys-42 each coordinate Zn(2+).

The protein belongs to the universal ribosomal protein uS14 family. Component of the 40S small ribosomal subunit. Zn(2+) is required as a cofactor.

The protein localises to the cytoplasm. It localises to the cytosol. Its subcellular location is the rough endoplasmic reticulum. The protein is Small ribosomal subunit protein uS14 (RpS29) of Ixodes scapularis (Black-legged tick).